The sequence spans 187 residues: Glutathione peroxidase 7 (187 aa).

Residues 1-19 (MVAATVAAAWLLLWAAACA) form the signal peptide. The active site involves Cys-57.

The protein belongs to the glutathione peroxidase family. As to expression, expressed in esophageal epithelial cells; expression is up-regulated after exposure to acidic bile acids.

The protein resides in the secreted. The enzyme catalyses 2 glutathione + H2O2 = glutathione disulfide + 2 H2O. Its function is as follows. It protects esophageal epithelia from hydrogen peroxide-induced oxidative stress. It suppresses acidic bile acid-induced reactive oxygen species (ROS) and protects against oxidative DNA damage and double-strand breaks. The chain is Glutathione peroxidase 7 (GPX7) from Homo sapiens (Human).